Here is a 393-residue protein sequence, read N- to C-terminus: Methylthioribose kinase (393 aa).

Residues Asn38, Lys53, and 107-109 contribute to the ATP site; that span reads EDL. Asp225 provides a ligand contact to substrate. Position 242–244 (242–244) interacts with ATP; sequence DPE. Arg332 contributes to the substrate binding site.

This sequence belongs to the methylthioribose kinase family. Homodimer.

The catalysed reaction is 5-(methylsulfanyl)-D-ribose + ATP = 5-(methylsulfanyl)-alpha-D-ribose 1-phosphate + ADP + H(+). Its pathway is amino-acid biosynthesis; L-methionine biosynthesis via salvage pathway; S-methyl-5-thio-alpha-D-ribose 1-phosphate from S-methyl-5'-thioadenosine (hydrolase route): step 2/2. Functionally, catalyzes the phosphorylation of methylthioribose into methylthioribose-1-phosphate. This Bacillus cereus (strain ZK / E33L) protein is Methylthioribose kinase.